Reading from the N-terminus, the 110-residue chain is NADH-quinone oxidoreductase subunit K (110 aa).

The next 3 helical transmembrane spans lie at L13–M33, I41–V61, and I73–Y93.

It belongs to the complex I subunit 4L family. NDH-1 is composed of 14 different subunits. Subunits NuoA, H, J, K, L, M, N constitute the membrane sector of the complex.

It is found in the cell inner membrane. It catalyses the reaction a quinone + NADH + 5 H(+)(in) = a quinol + NAD(+) + 4 H(+)(out). Functionally, NDH-1 shuttles electrons from NADH, via FMN and iron-sulfur (Fe-S) centers, to quinones in the respiratory chain. The immediate electron acceptor for the enzyme in this species is believed to be ubiquinone. Couples the redox reaction to proton translocation (for every two electrons transferred, four hydrogen ions are translocated across the cytoplasmic membrane), and thus conserves the redox energy in a proton gradient. The sequence is that of NADH-quinone oxidoreductase subunit K from Rickettsia prowazekii (strain Madrid E).